The following is a 285-amino-acid chain: Putative alkaline ceramidase dcd3B (285 aa).

The next 3 helical transmembrane spans lie at 34–54, 77–97, and 104–124; these read TFSS…MMSA, VLFS…YHAT, and LFDE…ILTI. Asn131 carries an N-linked (GlcNAc...) asparagine glycan. Helical transmembrane passes span 141-161, 166-186, 200-220, and 236-256; these read RFLP…ITII, IILQ…SYMY, PKKF…SWLT, and LHAV…QFFI.

Belongs to the alkaline ceramidase family.

It localises to the membrane. This chain is Putative alkaline ceramidase dcd3B (dcd3B), found in Dictyostelium discoideum (Social amoeba).